We begin with the raw amino-acid sequence, 610 residues long: MPNIEELKQRQEKIRNFSIIAHIDHGKSTLADRILEKTETVSSREMQAQLLDSMDLERERGITIKLNAIELNYKAKDGETYIFHLIDTPGHVDFTYEVSRSLAACEGAILVVDAAQGIEAQTLANVYLALDNDLEILPVINKIDLPAADPERVRTEIEDVIGLDASEAVLASAKAGIGIEEILEQIVEKVPAPQGDVEAPLQALIFDSVYDAYRGVILQVRVVNGMVKTGDKIQMMSNGKTFDVTEVGIFTPKAVGRDYLATGDVGYVAASIKTVADTRVGDTVTLADNPAAEPLHGYKQMNPMVFAGLYPIESNKYNDLREALEKLQLNDASLQFEPETSQALGFGFRCGFLGLLHMDVIQERLEREFNIDLIMTAPSVVYHVNTTDGEMLEVSNPSEFPDPTRIDAIEEPYVKAQIMVPQEYVGAVMELAQRKRGDFETMEYIDDNRVNVIYQIPLAEIVFDFFDKLKSSTRGYASFDYELSEYRRSQLVKMDILLNGDKVDALSFIVHREFAYERGKLIVDKLKKIIPRQQFEVPIQAAIGQKIVARTDIKALRKNVLAKCYGGDVSRKRKLLEKQKAGKKRMKAIGSVEVPQEAFLSVLSMDEDEK.

In terms of domain architecture, tr-type G spans 12-194; the sequence is EKIRNFSIIA…QIVEKVPAPQ (183 aa). Residues 24–29 and 141–144 each bind GTP; these read DHGKST and NKID.

This sequence belongs to the TRAFAC class translation factor GTPase superfamily. Classic translation factor GTPase family. LepA subfamily.

The protein localises to the cell membrane. The enzyme catalyses GTP + H2O = GDP + phosphate + H(+). Required for accurate and efficient protein synthesis under certain stress conditions. May act as a fidelity factor of the translation reaction, by catalyzing a one-codon backward translocation of tRNAs on improperly translocated ribosomes. Back-translocation proceeds from a post-translocation (POST) complex to a pre-translocation (PRE) complex, thus giving elongation factor G a second chance to translocate the tRNAs correctly. Binds to ribosomes in a GTP-dependent manner. The protein is Elongation factor 4 of Streptococcus thermophilus (strain CNRZ 1066).